The chain runs to 483 residues: UDP-N-acetylmuramate--L-alanine ligase (483 aa).

ATP is bound at residue 125–131 (GTHGKTT).

The protein belongs to the MurCDEF family.

Its subcellular location is the cytoplasm. It catalyses the reaction UDP-N-acetyl-alpha-D-muramate + L-alanine + ATP = UDP-N-acetyl-alpha-D-muramoyl-L-alanine + ADP + phosphate + H(+). Its pathway is cell wall biogenesis; peptidoglycan biosynthesis. Cell wall formation. The sequence is that of UDP-N-acetylmuramate--L-alanine ligase from Pseudoalteromonas translucida (strain TAC 125).